The primary structure comprises 576 residues: (+)-alpha-terpineol synthase (576 aa).

The (2E)-geranyl diphosphate site is built by arginine 286, aspartate 323, aspartate 327, arginine 466, and asparagine 469. Positions 323 and 327 each coordinate Mg(2+). Residues 323–327 (DDVYD) carry the DDXXD motif motif. Mg(2+) is bound by residues asparagine 469, threonine 473, and glutamate 477.

The protein belongs to the terpene synthase family. Tpsb subfamily. The cofactor is Mg(2+). It depends on Mn(2+) as a cofactor.

The catalysed reaction is (2E,6E)-farnesyl diphosphate = beta-bisabolene + diphosphate. It carries out the reaction (2E)-geranyl diphosphate + H2O = (R)-alpha-terpineol + diphosphate. It catalyses the reaction (2E)-geranyl diphosphate = (4S)-limonene + diphosphate. Its pathway is secondary metabolite biosynthesis; terpenoid biosynthesis. Functionally, monoterpene synthase which catalyzes the conversion of (2E)-geranyl diphosphate (GPP) to (R)-alpha-terpineol and (4S)-limonene, as well as small quantities of linalool, myrcene, (-)-alpha-pinene, (+)-sabinene and geraniol. To a lower extent, catalyzes the conversion of (2E,6E)-farnesyl diphosphate (FPP) to beta-bisabolene. The polypeptide is (+)-alpha-terpineol synthase (Santalum album (White sandalwood)).